The sequence spans 493 residues: Glutamate--tRNA ligase (493 aa).

The 'HIGH' region motif lies at 10-20; it reads PSPTGDPHVGT. Positions 251 to 255 match the 'KMSKS' region motif; the sequence is KLSKR. Lys-254 serves as a coordination point for ATP.

This sequence belongs to the class-I aminoacyl-tRNA synthetase family. Glutamate--tRNA ligase type 1 subfamily. In terms of assembly, monomer.

The protein localises to the cytoplasm. It carries out the reaction tRNA(Glu) + L-glutamate + ATP = L-glutamyl-tRNA(Glu) + AMP + diphosphate. Its function is as follows. Catalyzes the attachment of glutamate to tRNA(Glu) in a two-step reaction: glutamate is first activated by ATP to form Glu-AMP and then transferred to the acceptor end of tRNA(Glu). This chain is Glutamate--tRNA ligase, found in Pseudomonas putida (strain W619).